The sequence spans 298 residues: Probable tRNA(His) guanylyltransferase (298 aa).

Asp58, Gly59, and Asp105 together coordinate Mg(2+). Residues 58–63 (DGRNFH) and 104–105 (SD) each bind GTP.

Belongs to the tRNA(His) guanylyltransferase family. Homotetramer. Interacts with MFN1 and MFN2; functions as a guanyl-nucleotide exchange factor/GEF for MFN2 and also probably MFN1. The cofactor is Mg(2+).

Its subcellular location is the cytoplasm. The protein resides in the mitochondrion. The enzyme catalyses a 5'-end ribonucleotide-tRNA(His) + GTP + ATP + H2O = a 5'-end phospho-guanosine-ribonucleotide-tRNA(His) + AMP + 2 diphosphate + H(+). Adds a GMP to the 5'-end of tRNA(His) after transcription and RNase P cleavage. This step is essential for proper recognition of the tRNA and for the fidelity of protein synthesis. Also functions as a guanyl-nucleotide exchange factor/GEF for the MFN1 and MFN2 mitofusins thereby regulating mitochondrial fusion. By regulating both mitochondrial dynamics and bioenergetic function, it contributes to cell survival following oxidative stress. This is Probable tRNA(His) guanylyltransferase (THG1L) from Bos taurus (Bovine).